A 201-amino-acid polypeptide reads, in one-letter code: Ras-related protein Rab-9B (201 aa).

GTP is bound by residues Val18, Gly19, Lys20, Ser21, Ser22, Asp33, Ser34, Ala36, His38, and Thr39. Ser21 is a Mg(2+) binding site. The short motif at 31–42 is the Switch 1 element; it reads KFDSQAFHTIGV. Ser34 is modified (phosphoserine). 2 residues coordinate Mg(2+): Thr39 and Asp62. The Switch 2 signature appears at 64–78; the sequence is AGQERFKSLRTPFYR. 5 residues coordinate GTP: Gly65, Asn124, Lys125, Ala155, and Lys156. Residues Cys200 and Cys201 are each lipidated (S-geranylgeranyl cysteine).

It belongs to the small GTPase superfamily. Rab family. As to quaternary structure, interacts (GTP-bound form) with SGSM1; the GDP-bound form has much lower affinity for SGSM1. The GTP-bound form but not the GDP-bound form interacts with HPS4 and the BLOC-3 complex (heterodimer of HPS1 and HPS4) but does not interact with HPS1 alone. Interacts (GTP-bound form) with NDE1. Mg(2+) serves as cofactor. In terms of tissue distribution, ubiquitous.

It is found in the cell membrane. The protein localises to the cytoplasmic vesicle. It localises to the phagosome. The protein resides in the phagosome membrane. The enzyme catalyses GTP + H2O = GDP + phosphate + H(+). With respect to regulation, regulated by guanine nucleotide exchange factors (GEFs) which promote the exchange of bound GDP for free GTP. Regulated by GTPase activating proteins (GAPs) which increase the GTP hydrolysis activity. Inhibited by GDP dissociation inhibitors (GDIs). In terms of biological role, the small GTPases Rab are key regulators of intracellular membrane trafficking, from the formation of transport vesicles to their fusion with membranes. Rabs cycle between an inactive GDP-bound form and an active GTP-bound form that is able to recruit to membranes different sets of downstream effectors directly responsible for vesicle formation, movement, tethering and fusion. RAB9B is involved in the transport of proteins between the endosomes and the trans Golgi network. May use NDE1/NDEL1 as an effector to interact with the dynein motor complex in order to control retrograde trafficking of RAB9-associated late endosomes to the TGN. The sequence is that of Ras-related protein Rab-9B from Homo sapiens (Human).